The sequence spans 211 residues: Large ribosomal subunit protein uL4 (211 aa).

The segment covering 41–52 (QTNARQGTASTK) has biased composition (polar residues). Residues 41 to 78 (QTNARQGTASTKTRAEVRGGGRKPWRQKGTGRARAGSI) form a disordered region. A compositionally biased stretch (basic residues) spans 60 to 71 (GGRKPWRQKGTG).

The protein belongs to the universal ribosomal protein uL4 family. As to quaternary structure, part of the 50S ribosomal subunit.

Functionally, one of the primary rRNA binding proteins, this protein initially binds near the 5'-end of the 23S rRNA. It is important during the early stages of 50S assembly. It makes multiple contacts with different domains of the 23S rRNA in the assembled 50S subunit and ribosome. Its function is as follows. Forms part of the polypeptide exit tunnel. The sequence is that of Large ribosomal subunit protein uL4 from Rippkaea orientalis (strain PCC 8801 / RF-1) (Cyanothece sp. (strain PCC 8801)).